A 232-amino-acid polypeptide reads, in one-letter code: Large ribosomal subunit protein uL1 (232 aa).

It belongs to the universal ribosomal protein uL1 family. As to quaternary structure, part of the 50S ribosomal subunit.

Its function is as follows. Binds directly to 23S rRNA. The L1 stalk is quite mobile in the ribosome, and is involved in E site tRNA release. Protein L1 is also a translational repressor protein, it controls the translation of the L11 operon by binding to its mRNA. This Bacillus licheniformis (strain ATCC 14580 / DSM 13 / JCM 2505 / CCUG 7422 / NBRC 12200 / NCIMB 9375 / NCTC 10341 / NRRL NRS-1264 / Gibson 46) protein is Large ribosomal subunit protein uL1.